Here is a 448-residue protein sequence, read N- to C-terminus: Chromosomal replication initiator protein DnaA (448 aa).

A domain I, interacts with DnaA modulators region spans residues methionine 1–glutamate 85. A domain II region spans residues glutamate 85–leucine 110. The interval isoleucine 111–serine 327 is domain III, AAA+ region. 4 residues coordinate ATP: glycine 155, glycine 157, lysine 158, and threonine 159. Residues serine 328–aspartate 448 are domain IV, binds dsDNA.

This sequence belongs to the DnaA family. As to quaternary structure, oligomerizes as a right-handed, spiral filament on DNA at oriC.

The protein localises to the cytoplasm. Plays an essential role in the initiation and regulation of chromosomal replication. ATP-DnaA binds to the origin of replication (oriC) to initiate formation of the DNA replication initiation complex once per cell cycle. Binds the DnaA box (a 9 base pair repeat at the origin) and separates the double-stranded (ds)DNA. Forms a right-handed helical filament on oriC DNA; dsDNA binds to the exterior of the filament while single-stranded (ss)DNA is stabiized in the filament's interior. The ATP-DnaA-oriC complex binds and stabilizes one strand of the AT-rich DNA unwinding element (DUE), permitting loading of DNA polymerase. After initiation quickly degrades to an ADP-DnaA complex that is not apt for DNA replication. Binds acidic phospholipids. The polypeptide is Chromosomal replication initiator protein DnaA (Alkaliphilus metalliredigens (strain QYMF)).